Here is a 752-residue protein sequence, read N- to C-terminus: Cation-transporting P-type ATPase B (752 aa).

The HMA domain occupies 15–78 (RRIRLDVSGM…VVEKAGYHAA (64 aa)). A metal cation is bound by residues cysteine 26 and cysteine 29. A run of 6 helical transmembrane segments spans residues 105 to 125 (LLVA…FAIV), 132 to 152 (GWGY…AWPF), 167 to 187 (METL…SSVF), 201 to 221 (AILN…VFVL), 361 to 381 (IAGV…AAWL), and 390 to 410 (AFSV…GLAT). The active-site 4-aspartylphosphate intermediate is aspartate 446. The chain crosses the membrane as a helical span at residues 714–734 (AIPIAAAGLLNPLIAGAAMAF).

Belongs to the cation transport ATPase (P-type) (TC 3.A.3) family. Type IB subfamily.

Its subcellular location is the cell membrane. It catalyses the reaction ATP + H2O = ADP + phosphate + H(+). The chain is Cation-transporting P-type ATPase B (ctpB) from Mycobacterium bovis (strain ATCC BAA-935 / AF2122/97).